The following is a 347-amino-acid chain: Quinolinate synthase (347 aa).

Iminosuccinate-binding residues include histidine 47 and serine 68. [4Fe-4S] cluster is bound at residue cysteine 113. Iminosuccinate is bound by residues 139–141 (YAN) and serine 156. Cysteine 200 contributes to the [4Fe-4S] cluster binding site. Residues 226–228 (HPE) and threonine 243 contribute to the iminosuccinate site. Cysteine 297 is a binding site for [4Fe-4S] cluster.

Belongs to the quinolinate synthase family. Type 1 subfamily. The cofactor is [4Fe-4S] cluster.

Its subcellular location is the cytoplasm. The catalysed reaction is iminosuccinate + dihydroxyacetone phosphate = quinolinate + phosphate + 2 H2O + H(+). It functions in the pathway cofactor biosynthesis; NAD(+) biosynthesis; quinolinate from iminoaspartate: step 1/1. In terms of biological role, catalyzes the condensation of iminoaspartate with dihydroxyacetone phosphate to form quinolinate. The sequence is that of Quinolinate synthase from Escherichia coli (strain K12 / MC4100 / BW2952).